The sequence spans 91 residues: Probable Fe(2+)-trafficking protein (91 aa).

Belongs to the Fe(2+)-trafficking protein family.

Could be a mediator in iron transactions between iron acquisition and iron-requiring processes, such as synthesis and/or repair of Fe-S clusters in biosynthetic enzymes. This chain is Probable Fe(2+)-trafficking protein, found in Cellvibrio japonicus (strain Ueda107) (Pseudomonas fluorescens subsp. cellulosa).